Consider the following 358-residue polypeptide: Probable D-xylulose reductase A (358 aa).

Residues cysteine 47, histidine 72, and glutamate 73 each contribute to the Zn(2+) site. 182-187 contributes to the NAD(+) binding site; the sequence is GAGPVG.

The protein belongs to the zinc-containing alcohol dehydrogenase family. It depends on Zn(2+) as a cofactor.

It catalyses the reaction xylitol + NAD(+) = D-xylulose + NADH + H(+). It participates in carbohydrate degradation; L-arabinose degradation via L-arabinitol; D-xylulose 5-phosphate from L-arabinose (fungal route): step 4/5. Functionally, xylitol dehydrogenase which catalyzes the conversion of xylitol to D-xylulose. Xylose is a major component of hemicelluloses such as xylan. Most fungi utilize D-xylose via three enzymatic reactions, xylose reductase (XR), xylitol dehydrogenase (XDH), and xylulokinase, to form xylulose 5-phosphate, which enters pentose phosphate pathway. In Aspergillus fumigatus (strain CBS 144.89 / FGSC A1163 / CEA10) (Neosartorya fumigata), this protein is Probable D-xylulose reductase A (xdhA).